We begin with the raw amino-acid sequence, 320 residues long: Acetyl-coenzyme A carboxylase carboxyl transferase subunit beta (320 aa).

The CoA carboxyltransferase N-terminal domain maps to 25–294; the sequence is VWTKCDSCGQ…AKDEDELLGE (270 aa). The Zn(2+) site is built by Cys29, Cys32, Cys48, and Cys51. Residues 29–51 form a C4-type zinc finger; the sequence is CDSCGQVLYRAELERNLEVCPKC. The span at 295–310 shows a compositional bias: acidic residues; sequence EMIADDIESSDNEPEI. Residues 295 to 320 form a disordered region; the sequence is EMIADDIESSDNEPEINIETNKKEDV.

This sequence belongs to the AccD/PCCB family. As to quaternary structure, acetyl-CoA carboxylase is a heterohexamer composed of biotin carboxyl carrier protein (AccB), biotin carboxylase (AccC) and two subunits each of ACCase subunit alpha (AccA) and ACCase subunit beta (AccD). Requires Zn(2+) as cofactor.

It localises to the cytoplasm. It catalyses the reaction N(6)-carboxybiotinyl-L-lysyl-[protein] + acetyl-CoA = N(6)-biotinyl-L-lysyl-[protein] + malonyl-CoA. It functions in the pathway lipid metabolism; malonyl-CoA biosynthesis; malonyl-CoA from acetyl-CoA: step 1/1. In terms of biological role, component of the acetyl coenzyme A carboxylase (ACC) complex. Biotin carboxylase (BC) catalyzes the carboxylation of biotin on its carrier protein (BCCP) and then the CO(2) group is transferred by the transcarboxylase to acetyl-CoA to form malonyl-CoA. The chain is Acetyl-coenzyme A carboxylase carboxyl transferase subunit beta from Proteus mirabilis (strain HI4320).